Reading from the N-terminus, the 212-residue chain is Large ribosomal subunit protein uL3 (212 aa).

The interval 130–155 is disordered; it reads KRGNMTHGSKNHRLPGSTGAGTTPGR.

The protein belongs to the universal ribosomal protein uL3 family. In terms of assembly, part of the 50S ribosomal subunit. Forms a cluster with proteins L14 and L19.

One of the primary rRNA binding proteins, it binds directly near the 3'-end of the 23S rRNA, where it nucleates assembly of the 50S subunit. This chain is Large ribosomal subunit protein uL3, found in Rippkaea orientalis (strain PCC 8801 / RF-1) (Cyanothece sp. (strain PCC 8801)).